The sequence spans 832 residues: Elongation factor 2 (832 aa).

The region spanning 17–336 is the tr-type G domain; it reads HNIRNMSVIA…MIVTHLPSPA (320 aa). 26–33 contributes to the GTP binding site; sequence AHVDHGKS. Residues threonine 57 and threonine 59 each carry the phosphothreonine modification. GTP-binding positions include 152–155 and 207–209; these read NKVD and SGL. The tract at residues 580 to 608 is disordered; it reads AEPLPDGLTDDIEEGKVSPRDDPKERSNL. Residues 593 to 608 show a composition bias toward basic and acidic residues; that stretch reads EGKVSPRDDPKERSNL. At histidine 689 the chain carries Diphthamide.

This sequence belongs to the TRAFAC class translation factor GTPase superfamily. Classic translation factor GTPase family. EF-G/EF-2 subfamily.

It localises to the cytoplasm. The enzyme catalyses GTP + H2O = GDP + phosphate + H(+). Functionally, catalyzes the GTP-dependent ribosomal translocation step during translation elongation. During this step, the ribosome changes from the pre-translocational (PRE) to the post-translocational (POST) state as the newly formed A-site-bound peptidyl-tRNA and P-site-bound deacylated tRNA move to the P and E sites, respectively. Catalyzes the coordinated movement of the two tRNA molecules, the mRNA and conformational changes in the ribosome. This Cryptosporidium parvum protein is Elongation factor 2.